Reading from the N-terminus, the 269-residue chain is Cytochrome c oxidase subunit 3 (269 aa).

7 consecutive transmembrane segments (helical) span residues Pro-21–Met-41, Ile-45–Trp-65, Gly-90–Phe-110, Pro-138–Ile-160, Ala-167–Ile-187, Phe-205–Ile-225, and Val-247–Trp-267.

It belongs to the cytochrome c oxidase subunit 3 family. In terms of assembly, component of the cytochrome c oxidase (complex IV, CIV), a multisubunit enzyme composed of a catalytic core of 3 subunits and several supernumerary subunits. The complex exists as a monomer or a dimer and forms supercomplexes (SCs) in the inner mitochondrial membrane with ubiquinol-cytochrome c oxidoreductase (cytochrome b-c1 complex, complex III, CIII).

It localises to the mitochondrion inner membrane. It carries out the reaction 4 Fe(II)-[cytochrome c] + O2 + 8 H(+)(in) = 4 Fe(III)-[cytochrome c] + 2 H2O + 4 H(+)(out). In terms of biological role, component of the cytochrome c oxidase, the last enzyme in the mitochondrial electron transport chain which drives oxidative phosphorylation. The respiratory chain contains 3 multisubunit complexes succinate dehydrogenase (complex II, CII), ubiquinol-cytochrome c oxidoreductase (cytochrome b-c1 complex, complex III, CIII) and cytochrome c oxidase (complex IV, CIV), that cooperate to transfer electrons derived from NADH and succinate to molecular oxygen, creating an electrochemical gradient over the inner membrane that drives transmembrane transport and the ATP synthase. Cytochrome c oxidase is the component of the respiratory chain that catalyzes the reduction of oxygen to water. Electrons originating from reduced cytochrome c in the intermembrane space (IMS) are transferred via the dinuclear copper A center (CU(A)) of subunit 2 and heme A of subunit 1 to the active site in subunit 1, a binuclear center (BNC) formed by heme A3 and copper B (CU(B)). The BNC reduces molecular oxygen to 2 water molecules using 4 electrons from cytochrome c in the IMS and 4 protons from the mitochondrial matrix. In Lachancea kluyveri (strain ATCC 58438 / CBS 3082 / BCRC 21498 / NBRC 1685 / JCM 7257 / NCYC 543 / NRRL Y-12651) (Yeast), this protein is Cytochrome c oxidase subunit 3 (COX3).